Consider the following 379-residue polypeptide: Succinyl-diaminopimelate desuccinylase (379 aa).

Zn(2+) is bound at residue His70. Asp72 is an active-site residue. Residue Asp103 participates in Zn(2+) binding. The active-site Proton acceptor is Glu137. Zn(2+)-binding residues include Glu138, Glu166, and His352.

Belongs to the peptidase M20A family. DapE subfamily. Homodimer. Requires Zn(2+) as cofactor. It depends on Co(2+) as a cofactor.

It carries out the reaction N-succinyl-(2S,6S)-2,6-diaminopimelate + H2O = (2S,6S)-2,6-diaminopimelate + succinate. The protein operates within amino-acid biosynthesis; L-lysine biosynthesis via DAP pathway; LL-2,6-diaminopimelate from (S)-tetrahydrodipicolinate (succinylase route): step 3/3. In terms of biological role, catalyzes the hydrolysis of N-succinyl-L,L-diaminopimelic acid (SDAP), forming succinate and LL-2,6-diaminopimelate (DAP), an intermediate involved in the bacterial biosynthesis of lysine and meso-diaminopimelic acid, an essential component of bacterial cell walls. This is Succinyl-diaminopimelate desuccinylase from Burkholderia cenocepacia (strain ATCC BAA-245 / DSM 16553 / LMG 16656 / NCTC 13227 / J2315 / CF5610) (Burkholderia cepacia (strain J2315)).